A 121-amino-acid polypeptide reads, in one-letter code: Small ribosomal subunit protein bS16 (121 aa).

The segment at 80–121 (AGVREKTERNNPNKAKPGKKAQERAEEKAAKAAEAAEAADAE) is disordered. 2 stretches are compositionally biased toward basic and acidic residues: residues 81–90 (GVREKTERNN) and 99–110 (KAQERAEEKAAK).

The protein belongs to the bacterial ribosomal protein bS16 family.

In Ruegeria sp. (strain TM1040) (Silicibacter sp.), this protein is Small ribosomal subunit protein bS16.